The primary structure comprises 154 residues: Ribonuclease H (154 aa).

One can recognise an RNase H type-1 domain in the interval 9 to 150; that stretch reads SHPHIIIYTD…ADALANKGVE (142 aa). Mg(2+) contacts are provided by Asp-18, Glu-56, Asp-78, and Asp-142.

Belongs to the RNase H family. As to quaternary structure, monomer. Requires Mg(2+) as cofactor.

Its subcellular location is the cytoplasm. The enzyme catalyses Endonucleolytic cleavage to 5'-phosphomonoester.. Its function is as follows. Endonuclease that specifically degrades the RNA of RNA-DNA hybrids. The sequence is that of Ribonuclease H from Polynucleobacter asymbioticus (strain DSM 18221 / CIP 109841 / QLW-P1DMWA-1) (Polynucleobacter necessarius subsp. asymbioticus).